Reading from the N-terminus, the 121-residue chain is Ribonuclease P protein component (121 aa).

This sequence belongs to the RnpA family. As to quaternary structure, consists of a catalytic RNA component (M1 or rnpB) and a protein subunit.

The catalysed reaction is Endonucleolytic cleavage of RNA, removing 5'-extranucleotides from tRNA precursor.. Functionally, RNaseP catalyzes the removal of the 5'-leader sequence from pre-tRNA to produce the mature 5'-terminus. It can also cleave other RNA substrates such as 4.5S RNA. The protein component plays an auxiliary but essential role in vivo by binding to the 5'-leader sequence and broadening the substrate specificity of the ribozyme. The sequence is that of Ribonuclease P protein component from Geobacillus kaustophilus (strain HTA426).